A 180-amino-acid polypeptide reads, in one-letter code: Protein SPMIP9 (180 aa).

Microtubule inner protein component of sperm flagellar doublet microtubules. As to expression, testis-specific. Detected in the germ cell lineage at all stages.

Its subcellular location is the nucleus. It is found in the cytoplasm. It localises to the cytoskeleton. The protein resides in the flagellum axoneme. In terms of biological role, microtubule inner protein (MIP) part of the dynein-decorated doublet microtubules (DMTs) in flagella axoneme. In Homo sapiens (Human), this protein is Protein SPMIP9.